The following is a 182-amino-acid chain: Sperm acrosome-associated protein 7 (182 aa).

A signal peptide spans 1-24; that stretch reads MAANRGSRTFLSVFLLCCWQGAEL. A glycan (N-linked (GlcNAc...) asparagine) is linked at Asn40. The segment covering 112–140 has biased composition (basic and acidic residues); sequence LPTKEESGKNDRSTVANLHDHSSQTKHEP. The disordered stretch occupies residues 112-154; that stretch reads LPTKEESGKNDRSTVANLHDHSSQTKHEPPSSPEGKGSSNDDV.

Testis-specific. Expressed in zygotene and pachytene spermatocytes, round spermatids, elongating spermatids and spermatozoa (at protein level). Testis-specific.

The protein localises to the secreted. Its subcellular location is the cytoplasmic vesicle. It localises to the secretory vesicle. The protein resides in the acrosome lumen. Involved in fertilization. Seems not to play a direct role in sperm-egg binding or gamete fusion. This is Sperm acrosome-associated protein 7 from Mus musculus (Mouse).